Consider the following 512-residue polypeptide: Lysine--tRNA ligase (512 aa).

Mg(2+)-binding residues include Glu408 and Glu415.

It belongs to the class-II aminoacyl-tRNA synthetase family. As to quaternary structure, homodimer. The cofactor is Mg(2+).

It is found in the cytoplasm. It carries out the reaction tRNA(Lys) + L-lysine + ATP = L-lysyl-tRNA(Lys) + AMP + diphosphate. In Prochlorococcus marinus (strain MIT 9301), this protein is Lysine--tRNA ligase.